The following is a 446-amino-acid chain: Glutamyl-tRNA reductase 2 (446 aa).

Substrate-binding positions include 53-56 (TCNR), Ser105, 110-112 (EQQ), and Gln116. The active-site Nucleophile is the Cys54. Position 185 to 190 (185 to 190 (GAGKMG)) interacts with NADP(+). Residues 409-446 (AAELFGIENETAGGERREGGAEGAAAAPGAGPVRSQGT) are disordered. Residues 431–440 (GAAAAPGAGP) show a composition bias toward low complexity.

It belongs to the glutamyl-tRNA reductase family. In terms of assembly, homodimer.

The catalysed reaction is (S)-4-amino-5-oxopentanoate + tRNA(Glu) + NADP(+) = L-glutamyl-tRNA(Glu) + NADPH + H(+). It functions in the pathway porphyrin-containing compound metabolism; protoporphyrin-IX biosynthesis; 5-aminolevulinate from L-glutamyl-tRNA(Glu): step 1/2. In terms of biological role, catalyzes the NADPH-dependent reduction of glutamyl-tRNA(Glu) to glutamate 1-semialdehyde (GSA). This is Glutamyl-tRNA reductase 2 from Anaeromyxobacter dehalogenans (strain 2CP-C).